Consider the following 564-residue polypeptide: Phenylalanine--tRNA ligase beta subunit (564 aa).

A B5 domain is found at 286-362; it reads YFQNMLEVNV…IGMGLDSFKP (77 aa). The Mg(2+) site is built by Asp340, Asp346, Glu349, and Glu350.

Belongs to the phenylalanyl-tRNA synthetase beta subunit family. Type 2 subfamily. In terms of assembly, tetramer of two alpha and two beta subunits. Mg(2+) serves as cofactor.

The protein resides in the cytoplasm. It carries out the reaction tRNA(Phe) + L-phenylalanine + ATP = L-phenylalanyl-tRNA(Phe) + AMP + diphosphate + H(+). This Borrelia turicatae (strain 91E135) protein is Phenylalanine--tRNA ligase beta subunit.